The following is a 303-amino-acid chain: MHIYILGSAAGGGFPQWNCNCPNCHGVRTGTINAKVRTQSSIAISENGVDWILLNASPDIRQQLFDFKAAQPARKLRDTGITNVILMDSQLDHTTGLLTLREGCPINVWCTEMVYQDLTTGFPVFNMLKHWNGGLLYHQIDPKQAFKIDGFENLEFLPLIIQSAAPPYSPHRHDPHEGDNIALIIKDHKTQKQLFYAPGLGKIDDQIMQIMQDSDCVMIDGTLWTDDEMQQTGVGKKTGREMGHLYISGEGGSLSYLNQLSTPKKVLIHINNTNPILNEDSAQFAELKANDVEVAFDGMQIEL.

Belongs to the PqqB family.

Its pathway is cofactor biosynthesis; pyrroloquinoline quinone biosynthesis. Its function is as follows. May be involved in the transport of PQQ or its precursor to the periplasm. The chain is Coenzyme PQQ synthesis protein B from Acinetobacter baumannii (strain AB0057).